The following is a 479-amino-acid chain: Glutamate--tRNA ligase (479 aa).

The 'HIGH' region signature appears at 9-19 (PSPTGLFHIGT). A 'KMSKS' region motif is present at residues 248–252 (KLSKR). Lysine 251 serves as a coordination point for ATP.

This sequence belongs to the class-I aminoacyl-tRNA synthetase family. Glutamate--tRNA ligase type 1 subfamily. As to quaternary structure, monomer.

Its subcellular location is the cytoplasm. It catalyses the reaction tRNA(Glu) + L-glutamate + ATP = L-glutamyl-tRNA(Glu) + AMP + diphosphate. Its function is as follows. Catalyzes the attachment of glutamate to tRNA(Glu) in a two-step reaction: glutamate is first activated by ATP to form Glu-AMP and then transferred to the acceptor end of tRNA(Glu). This is Glutamate--tRNA ligase from Prochlorococcus marinus (strain MIT 9215).